We begin with the raw amino-acid sequence, 576 residues long: N-acetylmuramoyl-L-alanine amidase (576 aa).

Residues methionine 1 to alanine 21 form the signal peptide. The N-linked (GlcNAc...) asparagine glycan is linked to asparagine 77. Serine 239 is subject to Phosphoserine. 2 positions are modified to deamidated asparagine: asparagine 274 and asparagine 322. N-linked (GlcNAc...) asparagine glycosylation is present at asparagine 367. The N-acetylmuramoyl-L-alanine amidase domain maps to phenylalanine 406 to glycine 532. Histidine 410 contacts Zn(2+). An intrachain disulfide couples cysteine 419 to cysteine 425. Residue asparagine 485 is glycosylated (N-linked (GlcNAc...) asparagine). Zn(2+) contacts are provided by histidine 522 and cysteine 530. The interval lysine 550–glutamine 576 is disordered.

It belongs to the N-acetylmuramoyl-L-alanine amidase 2 family. Zn(2+) is required as a cofactor. In terms of tissue distribution, strongly expressed in liver and fetal liver, and secreted into serum. Expressed to a much lesser extent in transverse colon, lymph nodes, heart, thymus, pancreas, descending colon, stomach and testis. Isoform 2 is not detected in the liver or serum.

It localises to the secreted. The protein localises to the membrane. The catalysed reaction is Hydrolyzes the link between N-acetylmuramoyl residues and L-amino acid residues in certain cell-wall glycopeptides.. Functionally, may play a scavenger role by digesting biologically active peptidoglycan (PGN) into biologically inactive fragments. Has no direct bacteriolytic activity. The polypeptide is N-acetylmuramoyl-L-alanine amidase (PGLYRP2) (Homo sapiens (Human)).